The following is a 198-amino-acid chain: Putative glutathione S-transferase alpha-5 (198 aa).

One can recognise a GST N-terminal domain in the interval 2-78 (TKPTLTYFPV…YISEKHDFRG (77 aa)). Glutathione-binding positions include Y8, R42, 49-50 (QL), and 62-63 (QT). In terms of domain architecture, GST C-terminal spans 80 to 198 (TKEERARAHQ…YLESRPQSNF (119 aa)).

This sequence belongs to the GST superfamily. Alpha family.

It carries out the reaction RX + glutathione = an S-substituted glutathione + a halide anion + H(+). Functionally, conjugation of reduced glutathione to a wide number of exogenous and endogenous hydrophobic electrophiles. The chain is Putative glutathione S-transferase alpha-5 (gsta5) from Dictyostelium discoideum (Social amoeba).